The chain runs to 444 residues: Methylenetetrahydrofolate--tRNA-(uracil-5-)-methyltransferase TrmFO (444 aa).

9–14 (GAGLAG) is a binding site for FAD.

Belongs to the MnmG family. TrmFO subfamily. It depends on FAD as a cofactor.

Its subcellular location is the cytoplasm. It catalyses the reaction uridine(54) in tRNA + (6R)-5,10-methylene-5,6,7,8-tetrahydrofolate + NADH + H(+) = 5-methyluridine(54) in tRNA + (6S)-5,6,7,8-tetrahydrofolate + NAD(+). The catalysed reaction is uridine(54) in tRNA + (6R)-5,10-methylene-5,6,7,8-tetrahydrofolate + NADPH + H(+) = 5-methyluridine(54) in tRNA + (6S)-5,6,7,8-tetrahydrofolate + NADP(+). In terms of biological role, catalyzes the folate-dependent formation of 5-methyl-uridine at position 54 (M-5-U54) in all tRNAs. In Koribacter versatilis (strain Ellin345), this protein is Methylenetetrahydrofolate--tRNA-(uracil-5-)-methyltransferase TrmFO.